We begin with the raw amino-acid sequence, 152 residues long: Ribosome maturation factor RimP (152 aa).

This sequence belongs to the RimP family.

The protein resides in the cytoplasm. Its function is as follows. Required for maturation of 30S ribosomal subunits. This is Ribosome maturation factor RimP from Burkholderia lata (strain ATCC 17760 / DSM 23089 / LMG 22485 / NCIMB 9086 / R18194 / 383).